A 316-amino-acid polypeptide reads, in one-letter code: Transmembrane protein 231 (316 aa).

The helical transmembrane segment at 23–43 (AALFLLLAAALTYIPPLLVAF) threads the bilayer. N-linked (GlcNAc...) asparagine glycosylation is found at Asn194, Asn199, and Asn221. A helical membrane pass occupies residues 262-282 (FWEMVKFAWVQYVSILLIFLW).

This sequence belongs to the TMEM231 family. As to quaternary structure, part of the tectonic-like complex (also named B9 complex). Interacts with TMEM107.

It is found in the cell projection. Its subcellular location is the cilium membrane. Its function is as follows. Transmembrane component of the tectonic-like complex, a complex localized at the transition zone of primary cilia and acting as a barrier that prevents diffusion of transmembrane proteins between the cilia and plasma membranes. Required for ciliogenesis and sonic hedgehog/SHH signaling. In Homo sapiens (Human), this protein is Transmembrane protein 231 (TMEM231).